Consider the following 256-residue polypeptide: uncharacterized protein (256 aa).

Disordered regions lie at residues Met-1–Asp-38 and Pro-51–Gln-75.

This is an uncharacterized protein from Homo sapiens (Human).